Here is a 483-residue protein sequence, read N- to C-terminus: Membrane-bound lytic murein transglycosylase F (483 aa).

The first 18 residues, 1 to 18 (MKGLIARFIAGFALLLWA), serve as a signal peptide directing secretion. The segment at 19–267 (WDMVFPWQQL…RIEEKYFNHL (249 aa)) is non-LT domain. An LT domain region spans residues 269–483 (HFDYVDIQSY…SKESDSTLKE (215 aa)). Glutamate 312 is an active-site residue. Positions 458–483 (QQIQNNEEQPSVPQEISKESDSTLKE) are disordered. Residues 473-483 (ISKESDSTLKE) show a composition bias toward basic and acidic residues.

It in the N-terminal section; belongs to the bacterial solute-binding protein 3 family. This sequence in the C-terminal section; belongs to the transglycosylase Slt family.

Its subcellular location is the cell outer membrane. The catalysed reaction is Exolytic cleavage of the (1-&gt;4)-beta-glycosidic linkage between N-acetylmuramic acid (MurNAc) and N-acetylglucosamine (GlcNAc) residues in peptidoglycan, from either the reducing or the non-reducing ends of the peptidoglycan chains, with concomitant formation of a 1,6-anhydrobond in the MurNAc residue.. In terms of biological role, murein-degrading enzyme that degrades murein glycan strands and insoluble, high-molecular weight murein sacculi, with the concomitant formation of a 1,6-anhydromuramoyl product. Lytic transglycosylases (LTs) play an integral role in the metabolism of the peptidoglycan (PG) sacculus. Their lytic action creates space within the PG sacculus to allow for its expansion as well as for the insertion of various structures such as secretion systems and flagella. This is Membrane-bound lytic murein transglycosylase F from Actinobacillus pleuropneumoniae serotype 5b (strain L20).